The primary structure comprises 362 residues: Methionine import ATP-binding protein MetN (362 aa).

Residues 23–258 form the ABC transporter domain; sequence VRLTDVKRRF…PQAEITGSLL (236 aa). ATP is bound at residue 55–62; it reads GRSGAGKS.

It belongs to the ABC transporter superfamily. Methionine importer (TC 3.A.1.24) family. In terms of assembly, the complex is composed of two ATP-binding proteins (MetN), two transmembrane proteins (MetI) and a solute-binding protein (MetQ).

The protein localises to the cell inner membrane. The enzyme catalyses L-methionine(out) + ATP + H2O = L-methionine(in) + ADP + phosphate + H(+). It carries out the reaction D-methionine(out) + ATP + H2O = D-methionine(in) + ADP + phosphate + H(+). Functionally, part of the ABC transporter complex MetNIQ involved in methionine import. Responsible for energy coupling to the transport system. The chain is Methionine import ATP-binding protein MetN from Rhizobium johnstonii (strain DSM 114642 / LMG 32736 / 3841) (Rhizobium leguminosarum bv. viciae).